The chain runs to 395 residues: Cyclin-A2 (395 aa).

Residues 1-93 (MLAEQENQEN…EEAADAPGLR (93 aa)) form a disordered region. Over residues 27 to 60 (ALGLLRGGPARPGPAAQAARNGEGRGAAAGQQQQ) the composition is skewed to low complexity.

It belongs to the cyclin family. Cyclin AB subfamily. Interacts with the CDK1 and CDK2 protein kinases to form serine/threonine kinase holoenzyme complexes.

It is found in the nucleus. It localises to the cytoplasm. In terms of biological role, cyclin which controls both the G1/S and the G2/M transition phases of the cell cycle. Functions through the formation of specific serine/threonine kinase holoenzyme complexes with the cyclin-dependent protein kinases CDK1 and CDK2. The cyclin subunit confers the substrate specificity of these complexes and differentially interacts with and activates CDK1 and CDK2 throughout the cell cycle. This is Cyclin-A2 from Gallus gallus (Chicken).